A 135-amino-acid polypeptide reads, in one-letter code: Large ribosomal subunit protein uL16c (135 aa).

It belongs to the universal ribosomal protein uL16 family. As to quaternary structure, part of the 50S ribosomal subunit.

It localises to the plastid. It is found in the chloroplast. This chain is Large ribosomal subunit protein uL16c, found in Olimarabidopsis pumila (Dwarf rocket).